A 296-amino-acid chain; its full sequence is D-alanine--D-alanine ligase (296 aa).

Residues 103-293 (KEILMHHRMP…FDSFVKRIIE (191 aa)) form the ATP-grasp domain. 129–180 (ISFPVAVKPSSGGSSIATFKVKSIQELKHAYEEASKYGEVMIEQWVTGKEIT) serves as a coordination point for ATP. Asp247, Glu260, and Asn262 together coordinate Mg(2+).

The protein belongs to the D-alanine--D-alanine ligase family. Mg(2+) is required as a cofactor. Requires Mn(2+) as cofactor.

The protein resides in the cytoplasm. The catalysed reaction is 2 D-alanine + ATP = D-alanyl-D-alanine + ADP + phosphate + H(+). It functions in the pathway cell wall biogenesis; peptidoglycan biosynthesis. Cell wall formation. This is D-alanine--D-alanine ligase from Francisella tularensis subsp. novicida (strain U112).